The sequence spans 130 residues: Small ribosomal subunit protein uS8 (130 aa).

The protein belongs to the universal ribosomal protein uS8 family. In terms of assembly, part of the 30S ribosomal subunit.

Its function is as follows. One of the primary rRNA binding proteins, it binds directly to 16S rRNA central domain where it helps coordinate assembly of the platform of the 30S subunit. This is Small ribosomal subunit protein uS8 from Methanosarcina barkeri (strain Fusaro / DSM 804).